Here is a 389-residue protein sequence, read N- to C-terminus: Lipid-A-disaccharide synthase (389 aa).

Belongs to the LpxB family.

The catalysed reaction is a lipid X + a UDP-2-N,3-O-bis[(3R)-3-hydroxyacyl]-alpha-D-glucosamine = a lipid A disaccharide + UDP + H(+). The protein operates within bacterial outer membrane biogenesis; LPS lipid A biosynthesis. In terms of biological role, condensation of UDP-2,3-diacylglucosamine and 2,3-diacylglucosamine-1-phosphate to form lipid A disaccharide, a precursor of lipid A, a phosphorylated glycolipid that anchors the lipopolysaccharide to the outer membrane of the cell. The polypeptide is Lipid-A-disaccharide synthase (Burkholderia ambifaria (strain ATCC BAA-244 / DSM 16087 / CCUG 44356 / LMG 19182 / AMMD) (Burkholderia cepacia (strain AMMD))).